The sequence spans 278 residues: MLEIAGKKFDSHLIMGTGGATSQTLLEKALVASGTQLTTVAMRRFRAGNNTGTAGTSSGAAGGESVFGLLNRLGIDVLPNTAGCRTAKDAILTAQLAREALGTNWVKLELIADDRTLLPDVVELVDTCEMLVAEGFEVLAYTSDDPVVAKRLEDAGAAAVMPLGSPIGTGLGILNPHNIELICARASVPVLLDAGVGTASDAALAMELGCSGVLLASAVNRCQDPAAMATAMKHAVEAGRLAAAAGRIPQRTHAEGALASSSFEGLASWDEDWAEEVL.

The Schiff-base intermediate with DXP role is filled by Lys-107. 1-deoxy-D-xylulose 5-phosphate is bound by residues Gly-168, 194–195, and 216–217; these read AG and AS.

It belongs to the ThiG family. In terms of assembly, homotetramer. Forms heterodimers with either ThiH or ThiS.

Its subcellular location is the cytoplasm. The enzyme catalyses [ThiS sulfur-carrier protein]-C-terminal-Gly-aminoethanethioate + 2-iminoacetate + 1-deoxy-D-xylulose 5-phosphate = [ThiS sulfur-carrier protein]-C-terminal Gly-Gly + 2-[(2R,5Z)-2-carboxy-4-methylthiazol-5(2H)-ylidene]ethyl phosphate + 2 H2O + H(+). It participates in cofactor biosynthesis; thiamine diphosphate biosynthesis. Its function is as follows. Catalyzes the rearrangement of 1-deoxy-D-xylulose 5-phosphate (DXP) to produce the thiazole phosphate moiety of thiamine. Sulfur is provided by the thiocarboxylate moiety of the carrier protein ThiS. In vitro, sulfur can be provided by H(2)S. The polypeptide is Thiazole synthase (Corynebacterium urealyticum (strain ATCC 43042 / DSM 7109)).